The chain runs to 230 residues: Uracil-DNA glycosylase (230 aa).

The Proton acceptor role is filled by D70.

It belongs to the uracil-DNA glycosylase (UDG) superfamily. UNG family.

The protein resides in the cytoplasm. The catalysed reaction is Hydrolyzes single-stranded DNA or mismatched double-stranded DNA and polynucleotides, releasing free uracil.. In terms of biological role, excises uracil residues from the DNA which can arise as a result of misincorporation of dUMP residues by DNA polymerase or due to deamination of cytosine. This chain is Uracil-DNA glycosylase, found in Pseudomonas savastanoi pv. phaseolicola (strain 1448A / Race 6) (Pseudomonas syringae pv. phaseolicola (strain 1448A / Race 6)).